A 2208-amino-acid polypeptide reads, in one-letter code: RNA-directed RNA polymerase L (2208 aa).

Residues 26–284 form an endonuclease region; it reads KDALLSQVHP…LHQDSDTINC (259 aa). Mn(2+)-binding residues include E51, D89, and E102. Residue K115 is part of the active site. Positions 1171-1367 constitute a RdRp catalytic domain; it reads CDMKMAVNNG…YLSSKLNKFV (197 aa). Residue D1329 participates in Mg(2+) binding.

This sequence belongs to the Bunyavirales RNA polymerase family. Homomultimer; the oligomeric structure is essential for the polymerase activity. Interacts with nucleoprotein N. Interacts with protein Z; this interaction inhibits viral transcription and replication, Z partially blocks the product exit tunnel for the releasing nascent RNA product. It depends on Mn(2+) as a cofactor. The cofactor is Mg(2+).

It is found in the virion. The protein localises to the host cytoplasm. The enzyme catalyses RNA(n) + a ribonucleoside 5'-triphosphate = RNA(n+1) + diphosphate. In terms of biological role, RNA-dependent RNA polymerase, which is responsible for the replication and transcription of the viral RNA genome using antigenomic RNA as an intermediate. During transcription, synthesizes subgenomic RNAs and assures their capping by a cap-snatching mechanism, which involves the endonuclease activity cleaving the host capped pre-mRNAs. These short capped RNAs are then used as primers for viral transcription. The 3'-end of subgenomic mRNAs molecules are heterogeneous and not polyadenylated. The replicase function is to direct synthesis of antigenomic and genomic RNA which are encapsidated and non capped. As a consequence of the use of the same enzyme for both transcription and replication, these mechanisms need to be well coordinated. These processes may be regulated by proteins N and Z in a dose-dependent manner. Z protein inhibits the viral polymerase L und thus the viral transcription and RNA synthesis. The protein is RNA-directed RNA polymerase L of Homo sapiens (Human).